Consider the following 206-residue polypeptide: Holliday junction branch migration complex subunit RuvA (206 aa).

The interval 1 to 64 (MIGRLRGNLL…EDAQLLYGFN (64 aa)) is domain I. A domain II region spans residues 65-143 (TKKERALFRE…GWGAGDLFTP (79 aa)). The flexible linker stretch occupies residues 144–157 (ADTTSMDDASDLIS). The domain III stretch occupies residues 158–206 (SPQSAQDEAVSALISLGYKPVQASKMVSQVAKPDMTSESLIRESLKSMI).

This sequence belongs to the RuvA family. Homotetramer. Forms an RuvA(8)-RuvB(12)-Holliday junction (HJ) complex. HJ DNA is sandwiched between 2 RuvA tetramers; dsDNA enters through RuvA and exits via RuvB. An RuvB hexamer assembles on each DNA strand where it exits the tetramer. Each RuvB hexamer is contacted by two RuvA subunits (via domain III) on 2 adjacent RuvB subunits; this complex drives branch migration. In the full resolvosome a probable DNA-RuvA(4)-RuvB(12)-RuvC(2) complex forms which resolves the HJ.

Its subcellular location is the cytoplasm. In terms of biological role, the RuvA-RuvB-RuvC complex processes Holliday junction (HJ) DNA during genetic recombination and DNA repair, while the RuvA-RuvB complex plays an important role in the rescue of blocked DNA replication forks via replication fork reversal (RFR). RuvA specifically binds to HJ cruciform DNA, conferring on it an open structure. The RuvB hexamer acts as an ATP-dependent pump, pulling dsDNA into and through the RuvAB complex. HJ branch migration allows RuvC to scan DNA until it finds its consensus sequence, where it cleaves and resolves the cruciform DNA. This chain is Holliday junction branch migration complex subunit RuvA, found in Aliivibrio salmonicida (strain LFI1238) (Vibrio salmonicida (strain LFI1238)).